We begin with the raw amino-acid sequence, 218 residues long: uncharacterized protein (218 aa).

It belongs to the glycosyltransferase 2 family.

This is an uncharacterized protein from Mycobacterium bovis (strain ATCC BAA-935 / AF2122/97).